The sequence spans 83 residues: Toxin CjTL8 (83 aa).

An N-terminal signal peptide occupies residues Met-1–Ala-20. Residues Lys-21–Arg-44 constitute a propeptide that is removed on maturation. Residue Phe-81 is modified to Phenylalanine amide.

Post-translationally, contains 3 disulfide bonds.

The protein resides in the secreted. Its subcellular location is the nematocyst. Functionally, in vivo, induces immediate paralysis on shrimps (C.multidentata), followed by death when high doses are injected. No activity is observed when injected into fly larvae (M.domestica). The sequence is that of Toxin CjTL8 from Epiactis japonica (Sea anemone).